The sequence spans 261 residues: Ribosome-inactivating protein PD-L1/PD-L2 (261 aa).

2 N-linked (GlcNAc...) asparagine; in PD-L1 and PD-L2 glycosylation sites follow: N10 and N43. 2 disulfide bridges follow: C34/C258 and C84/C105. Residue Y72 is part of the active site. Residue V73 coordinates substrate. A substrate-binding site is contributed by S120. Active-site residues include Y122, E175, and R178. R178 lines the substrate pocket. N255 carries N-linked (GlcNAc...) asparagine; in PD-L1 glycosylation.

It belongs to the ribosome-inactivating protein family. Type 1 RIP subfamily. Post-translationally, N-glycosylated. Loss of glycosylation does not affect DNA-cleaving ability. Loss of glycosylation does not affect protein synthesis inhibition, but increases adenine polynucleotide glycosidase activity likely as a consequence of the increased accessibility of substrates to the active site pocket in the absence of glycosylation. As to expression, expressed in leaves (at protein level).

It carries out the reaction Endohydrolysis of the N-glycosidic bond at one specific adenosine on the 28S rRNA.. In terms of biological role, inhibits protein synthesis. Has adenine polynucleotide glycosidase activity on herring sperm (hs)DNA and poly(A) substrates. Cleaves supercoiled pBR322 dsDNA. The sequence is that of Ribosome-inactivating protein PD-L1/PD-L2 from Phytolacca dioica (Bella sombra tree).